A 318-amino-acid polypeptide reads, in one-letter code: ATP phosphoribosyltransferase regulatory subunit (318 aa).

It belongs to the class-II aminoacyl-tRNA synthetase family. HisZ subfamily. In terms of assembly, heteromultimer composed of HisG and HisZ subunits.

Its subcellular location is the cytoplasm. Its pathway is amino-acid biosynthesis; L-histidine biosynthesis; L-histidine from 5-phospho-alpha-D-ribose 1-diphosphate: step 1/9. Its function is as follows. Required for the first step of histidine biosynthesis. May allow the feedback regulation of ATP phosphoribosyltransferase activity by histidine. The sequence is that of ATP phosphoribosyltransferase regulatory subunit from Lactococcus lactis subsp. cremoris (strain SK11).